Reading from the N-terminus, the 120-residue chain is NAD(P)H-quinone oxidoreductase subunit 3 (120 aa).

The next 3 membrane-spanning stretches (helical) occupy residues 7 to 27, 64 to 84, and 89 to 109; these read YEYV…ALTA, MFAL…PWAV, and LGLL…VALV.

Belongs to the complex I subunit 3 family. In terms of assembly, NDH-1 can be composed of about 15 different subunits; different subcomplexes with different compositions have been identified which probably have different functions.

It localises to the cellular thylakoid membrane. It catalyses the reaction a plastoquinone + NADH + (n+1) H(+)(in) = a plastoquinol + NAD(+) + n H(+)(out). It carries out the reaction a plastoquinone + NADPH + (n+1) H(+)(in) = a plastoquinol + NADP(+) + n H(+)(out). NDH-1 shuttles electrons from an unknown electron donor, via FMN and iron-sulfur (Fe-S) centers, to quinones in the respiratory and/or the photosynthetic chain. The immediate electron acceptor for the enzyme in this species is believed to be plastoquinone. Couples the redox reaction to proton translocation, and thus conserves the redox energy in a proton gradient. Cyanobacterial NDH-1 also plays a role in inorganic carbon-concentration. The protein is NAD(P)H-quinone oxidoreductase subunit 3 of Crocosphaera subtropica (strain ATCC 51142 / BH68) (Cyanothece sp. (strain ATCC 51142)).